Here is a 447-residue protein sequence, read N- to C-terminus: Gamma-glutamyl phosphate reductase (447 aa).

The protein belongs to the gamma-glutamyl phosphate reductase family.

It localises to the cytoplasm. It catalyses the reaction L-glutamate 5-semialdehyde + phosphate + NADP(+) = L-glutamyl 5-phosphate + NADPH + H(+). It participates in amino-acid biosynthesis; L-proline biosynthesis; L-glutamate 5-semialdehyde from L-glutamate: step 2/2. Its function is as follows. Catalyzes the NADPH-dependent reduction of L-glutamate 5-phosphate into L-glutamate 5-semialdehyde and phosphate. The product spontaneously undergoes cyclization to form 1-pyrroline-5-carboxylate. The chain is Gamma-glutamyl phosphate reductase from Methanosarcina acetivorans (strain ATCC 35395 / DSM 2834 / JCM 12185 / C2A).